The sequence spans 101 residues: UPF0213 protein VC_A0739 (101 aa).

The region spanning Ser-9–Ala-85 is the GIY-YIG domain.

It belongs to the UPF0213 family.

The polypeptide is UPF0213 protein VC_A0739 (Vibrio cholerae serotype O1 (strain ATCC 39315 / El Tor Inaba N16961)).